The sequence spans 674 residues: DNA ligase (674 aa).

NAD(+) contacts are provided by residues Asp-35–Asp-39, Ser-84–Leu-85, and Glu-116. Catalysis depends on Lys-118, which acts as the N6-AMP-lysine intermediate. Residues Arg-139, Glu-176, Lys-293, and Lys-317 each contribute to the NAD(+) site. Positions 411, 414, 429, and 435 each coordinate Zn(2+). A BRCT domain is found at Asp-593–Val-674.

It belongs to the NAD-dependent DNA ligase family. LigA subfamily. Requires Mg(2+) as cofactor. Mn(2+) serves as cofactor.

It carries out the reaction NAD(+) + (deoxyribonucleotide)n-3'-hydroxyl + 5'-phospho-(deoxyribonucleotide)m = (deoxyribonucleotide)n+m + AMP + beta-nicotinamide D-nucleotide.. Functionally, DNA ligase that catalyzes the formation of phosphodiester linkages between 5'-phosphoryl and 3'-hydroxyl groups in double-stranded DNA using NAD as a coenzyme and as the energy source for the reaction. It is essential for DNA replication and repair of damaged DNA. The sequence is that of DNA ligase from Saccharophagus degradans (strain 2-40 / ATCC 43961 / DSM 17024).